A 300-amino-acid chain; its full sequence is Bifunctional protein FolD (300 aa).

Residues 172-174, S206, and I247 contribute to the NADP(+) site; that span reads GRS.

It belongs to the tetrahydrofolate dehydrogenase/cyclohydrolase family. Homodimer.

The catalysed reaction is (6R)-5,10-methylene-5,6,7,8-tetrahydrofolate + NADP(+) = (6R)-5,10-methenyltetrahydrofolate + NADPH. The enzyme catalyses (6R)-5,10-methenyltetrahydrofolate + H2O = (6R)-10-formyltetrahydrofolate + H(+). Its pathway is one-carbon metabolism; tetrahydrofolate interconversion. Functionally, catalyzes the oxidation of 5,10-methylenetetrahydrofolate to 5,10-methenyltetrahydrofolate and then the hydrolysis of 5,10-methenyltetrahydrofolate to 10-formyltetrahydrofolate. This Rhodopirellula baltica (strain DSM 10527 / NCIMB 13988 / SH1) protein is Bifunctional protein FolD.